The sequence spans 85 residues: Conotoxin Lt28.7 (85 aa).

Residues 1-21 (MPKLEMMLLVLLILPLCYIDA) form the signal peptide. Residues 22–40 (VGPPPPWNMEDEIIEHWQE) constitute a propeptide that is removed on maturation.

The protein belongs to the conotoxin D superfamily. Post-translationally, contains 5 disulfide bonds. In terms of tissue distribution, expressed by the venom duct.

Its subcellular location is the secreted. Functionally, probable neurotoxin. This Conus litteratus (Lettered cone) protein is Conotoxin Lt28.7.